The following is a 563-amino-acid chain: Lipoprotein LpqB (563 aa).

An N-terminal signal peptide occupies residues 1-19 (MRRMKALTAAMTAALLVSG). C20 carries the N-palmitoyl cysteine lipid modification. A lipid anchor (S-diacylglycerol cysteine) is attached at C20.

It belongs to the LpqB lipoprotein family.

It is found in the cell membrane. This Corynebacterium efficiens (strain DSM 44549 / YS-314 / AJ 12310 / JCM 11189 / NBRC 100395) protein is Lipoprotein LpqB.